We begin with the raw amino-acid sequence, 73 residues long: Conotoxin CnIIIE (73 aa).

An N-terminal signal peptide occupies residues 1–19 (MSKLGVLLTICLLLFPLTA). Residues 20 to 49 (LPMDGDQSVDRPAERMQDDISSEQYPLFNQ) constitute a propeptide that is removed on maturation. Intrachain disulfides connect C53–C72, C54–C70, and C60–C73.

The protein belongs to the conotoxin M superfamily. Expressed by the venom duct.

The protein resides in the secreted. Functionally, shows a paralytic effect in fish. The protein is Conotoxin CnIIIE of Conus consors (Singed cone).